Consider the following 1067-residue polypeptide: Probable importin subunit beta-4 (1067 aa).

In terms of domain architecture, Importin N-terminal spans 27-94 (ATRALETKYL…RSNLLDITLK (68 aa)). HEAT repeat units lie at residues 159–196 (KLLLDFVNLFSQTITDSSRTVRVTSVQGLGAIAEVLES), 379–416 (GNLPNIFPIIINGLCDNDMDVRQAALLALSQIAVEIPT), 420–457 (KHHAQLLPLVFELMSTQGVKVGKSACNCIDALLEGLDK), 591–633 (PFLE…SVET), 890–927 (PFTRDVFSLFMAALEDSEGEVRSNAAYSMGLLCQFSTE), and 1013–1050 (QHLGELIPVFASVLTGSPEQLNDELRSELLSMVKEIAP).

The protein belongs to the importin beta family.

The protein resides in the cytoplasm. Its subcellular location is the nucleus. It localises to the nucleus envelope. Its function is as follows. Required for nuclear protein import, its predominant substrate seems to be ribosomal proteins. Binds to nucleoporins and the GTP-bound form of gsp1 (Ran). The polypeptide is Probable importin subunit beta-4 (kap123) (Schizosaccharomyces pombe (strain 972 / ATCC 24843) (Fission yeast)).